Here is a 121-residue protein sequence, read N- to C-terminus: uncharacterized protein (121 aa).

A helical membrane pass occupies residues 6–26 (ITTASILLVVIVAFCAAAPMI).

The protein resides in the membrane. This is an uncharacterized protein from Caenorhabditis elegans.